Reading from the N-terminus, the 134-residue chain is TSC22 domain family protein 3 (134 aa).

N-acetylmethionine is present on methionine 1. An AP1-binding region spans residues 1–60 (MNTEMYQTPMEVAVYQLHNFSISFFSSLLGGDVVSVKLDNSASGASVVAIDNKIEQAMDL). Phosphoserine is present on residues alanine 42 and valine 73. Residues 76–97 (LKEQIRELVEKNSQLERENTLL) are leucine-zipper. Serine 102 bears the Phosphoserine mark. Residues 108-134 (KFQSCLSPEEPAPESPQVPEAPGGSAV) form a disordered region.

The protein belongs to the TSC-22/Dip/Bun family. Can form homodimers, however it is likely to function as a monomer. Interacts with NFKB1. Interacts (via N-terminus) with JUN and FOS; these interactions inhibit the binding of active AP1 to its target DNA. In terms of assembly, interacts with MYOD1. Interacts with HDAC1; this interaction affects HDAC1 activity on MYOG promoter and thus inhibits MYOD1 transcriptional activity. In terms of tissue distribution, ubiquitously expressed, including in the fetal brain and liver. Expressed in brain, lung, spleen and skeletal muscle. Lower levels detected in heart and kidney. Not detected in the pancreas. In non-lymphoid tissues, in the absence of inflammation, the major source of constitutive expression is the macrophage lineage. Also expressed in cells from different hemopoietic cell lineages, including bone marrow cells, CD34+ stem cells, mature B- and T-cells, monocytes and granulocytes. Down-regulated in activated macrophages from inflammatory lesions of delayed-type hypersensitivity (DTH) reactions, such as in tuberculosis and in Crohn disease, whereas in Burkitt lymphoma, persists in macrophages involved in the phagocytosis of apoptotic malignant cells.

The protein resides in the cytoplasm. It localises to the nucleus. Functionally, protects T-cells from IL2 deprivation-induced apoptosis through the inhibition of FOXO3A transcriptional activity that leads to the down-regulation of the pro-apoptotic factor BCL2L11. In macrophages, plays a role in the anti-inflammatory and immunosuppressive effects of glucocorticoids and IL10. In T-cells, inhibits anti-CD3-induced NFKB1 nuclear translocation and thereby NFKB1 DNA-binding activities. In vitro, suppresses AP-1 transcription factor complex DNA-binding activities. Its function is as follows. Inhibits myogenic differentiation and mediates anti-myogenic effects of glucocorticoids by binding and regulating MYOD1 and HDAC1 transcriptional activity resulting in reduced expression of MYOG. This chain is TSC22 domain family protein 3, found in Homo sapiens (Human).